A 686-amino-acid chain; its full sequence is Calponin homology and LIM domain-containing protein (686 aa).

The Calponin-homology (CH) domain occupies 15-120; the sequence is ELALDESRDW…ITLYWLGRAA (106 aa). LIM zinc-binding domains lie at 139-200 and 219-279; these read MNCS…ATNL and NKCS…SCGK. Residues 305 to 314 are compositionally biased toward basic and acidic residues; that stretch reads KQVMDKDGHD. The segment at 305–345 is disordered; the sequence is KQVMDKDGHDHHHHNHNKPTTTTTTTNSNSPLAKKKSDSCK. Residues 322-333 show a composition bias toward low complexity; the sequence is KPTTTTTTTNSN. 4 LIM zinc-binding domains span residues 373 to 435, 437 to 495, 519 to 579, and 583 to 658; these read GTCG…NNKS, KNCH…LNQY, DRCV…IQQS, and DHCA…ASSS.

As to quaternary structure, interacts with limF and rab21.

Functionally, involved in the regulation of phagocytosis. May repress rab21. The polypeptide is Calponin homology and LIM domain-containing protein (ChLim) (Dictyostelium discoideum (Social amoeba)).